Reading from the N-terminus, the 34-residue chain is Dermaseptin-S2 (34 aa).

It belongs to the frog skin active peptide (FSAP) family. Dermaseptin subfamily. In terms of tissue distribution, expressed by the skin glands.

The protein localises to the secreted. Its function is as follows. Potent antimicrobial peptide with activity against bacteria and protozoa. Also has activity against fungi. Probably acts by disturbing membrane functions with its amphipathic structure. This is Dermaseptin-S2 from Phyllomedusa sauvagei (Sauvage's leaf frog).